We begin with the raw amino-acid sequence, 350 residues long: Holliday junction branch migration complex subunit RuvB (350 aa).

Residues 1 to 22 (MDHTASLSPVRPEAQPTDDRER) form a disordered region. The interval 1–185 (MDHTASLSPV…FGIVERFEFY (185 aa)) is large ATPase domain (RuvB-L). Residues Leu24, Arg25, Gly66, Lys69, Thr70, Thr71, 132–134 (EDY), Arg175, Tyr185, and Arg222 contribute to the ATP site. Position 70 (Thr70) interacts with Mg(2+). The tract at residues 186–256 (TPEELAAIVQ…IVRAGLAHLK (71 aa)) is small ATPAse domain (RuvB-S). A head domain (RuvB-H) region spans residues 259–350 (ELGLELHDIQ…PHSPEQGTLL (92 aa)). DNA is bound by residues Arg314 and Arg319.

The protein belongs to the RuvB family. As to quaternary structure, homohexamer. Forms an RuvA(8)-RuvB(12)-Holliday junction (HJ) complex. HJ DNA is sandwiched between 2 RuvA tetramers; dsDNA enters through RuvA and exits via RuvB. An RuvB hexamer assembles on each DNA strand where it exits the tetramer. Each RuvB hexamer is contacted by two RuvA subunits (via domain III) on 2 adjacent RuvB subunits; this complex drives branch migration. In the full resolvosome a probable DNA-RuvA(4)-RuvB(12)-RuvC(2) complex forms which resolves the HJ.

It is found in the cytoplasm. The enzyme catalyses ATP + H2O = ADP + phosphate + H(+). Functionally, the RuvA-RuvB-RuvC complex processes Holliday junction (HJ) DNA during genetic recombination and DNA repair, while the RuvA-RuvB complex plays an important role in the rescue of blocked DNA replication forks via replication fork reversal (RFR). RuvA specifically binds to HJ cruciform DNA, conferring on it an open structure. The RuvB hexamer acts as an ATP-dependent pump, pulling dsDNA into and through the RuvAB complex. RuvB forms 2 homohexamers on either side of HJ DNA bound by 1 or 2 RuvA tetramers; 4 subunits per hexamer contact DNA at a time. Coordinated motions by a converter formed by DNA-disengaged RuvB subunits stimulates ATP hydrolysis and nucleotide exchange. Immobilization of the converter enables RuvB to convert the ATP-contained energy into a lever motion, pulling 2 nucleotides of DNA out of the RuvA tetramer per ATP hydrolyzed, thus driving DNA branch migration. The RuvB motors rotate together with the DNA substrate, which together with the progressing nucleotide cycle form the mechanistic basis for DNA recombination by continuous HJ branch migration. Branch migration allows RuvC to scan DNA until it finds its consensus sequence, where it cleaves and resolves cruciform DNA. The protein is Holliday junction branch migration complex subunit RuvB of Treponema pallidum (strain Nichols).